Reading from the N-terminus, the 594-residue chain is UvrABC system protein C (594 aa).

Residues 14-91 form the GIY-YIG domain; that stretch reads DSPGCYLHKD…IQENMPKYNI (78 aa). The UVR domain maps to 196-231; that stretch reads DKIIDDLRSKMLEASHNQEFERAAEYRDLISGIATM.

This sequence belongs to the UvrC family. In terms of assembly, interacts with UvrB in an incision complex.

The protein localises to the cytoplasm. Its function is as follows. The UvrABC repair system catalyzes the recognition and processing of DNA lesions. UvrC both incises the 5' and 3' sides of the lesion. The N-terminal half is responsible for the 3' incision and the C-terminal half is responsible for the 5' incision. This chain is UvrABC system protein C, found in Streptococcus equi subsp. zooepidemicus (strain H70).